The sequence spans 281 residues: Diaminopimelate epimerase (281 aa).

N13 and N66 together coordinate substrate. The active-site Proton donor is C75. Substrate contacts are provided by residues 76 to 77 (GN), N164, N197, and 215 to 216 (ER). C224 (proton acceptor) is an active-site residue. Residue 225–226 (GT) coordinates substrate.

Belongs to the diaminopimelate epimerase family. Homodimer.

Its subcellular location is the cytoplasm. It carries out the reaction (2S,6S)-2,6-diaminopimelate = meso-2,6-diaminopimelate. The protein operates within amino-acid biosynthesis; L-lysine biosynthesis via DAP pathway; DL-2,6-diaminopimelate from LL-2,6-diaminopimelate: step 1/1. Functionally, catalyzes the stereoinversion of LL-2,6-diaminopimelate (L,L-DAP) to meso-diaminopimelate (meso-DAP), a precursor of L-lysine and an essential component of the bacterial peptidoglycan. This Picosynechococcus sp. (strain ATCC 27264 / PCC 7002 / PR-6) (Agmenellum quadruplicatum) protein is Diaminopimelate epimerase.